We begin with the raw amino-acid sequence, 236 residues long: Phosphoglycolate phosphatase (236 aa).

The active-site Nucleophile is the aspartate 23. Mg(2+) is bound by residues aspartate 23 and aspartate 25. Lysine 162 contacts substrate. Mg(2+) contacts are provided by aspartate 185 and aspartate 189.

The protein belongs to the archaeal SPP-like hydrolase family. It depends on Mg(2+) as a cofactor.

It catalyses the reaction 2-phosphoglycolate + H2O = glycolate + phosphate. Its function is as follows. Catalyzes the dephosphorylation of 2-phosphoglycolate. This Picrophilus torridus (strain ATCC 700027 / DSM 9790 / JCM 10055 / NBRC 100828 / KAW 2/3) protein is Phosphoglycolate phosphatase.